A 369-amino-acid polypeptide reads, in one-letter code: Cyanuric acid amidohydrolase (369 aa).

Residues 1–100 (MPRRAEILRL…HWLVIAAREA (100 aa)) form an RU A region. Substrate is bound by residues arginine 53 and 81 to 82 (SG). Positions 106-242 (ALAVGQARTP…HEVVVMGMSP (137 aa)) are RU B. Residue lysine 155 is part of the active site. Substrate-binding positions include arginine 187 and 225–226 (SA). The active-site Nucleophile is the serine 225. Residues 248 to 369 (LVIDHAVMAD…ARRSGAAGPA (122 aa)) form an RU C region. Residue glutamate 296 coordinates Mg(2+). Substrate contacts are provided by residues arginine 323 and 342-343 (SG). Positions 345, 348, 349, 350, and 353 each coordinate Mg(2+).

The protein belongs to the cyclic amide hydrolase (CyAH) family. As to quaternary structure, homotetramer.

It carries out the reaction cyanurate + H2O = 1-carboxybiuret + H(+). It participates in xenobiotic degradation; atrazine degradation; biuret from cyanurate: step 1/1. With respect to regulation, inhibited by barbituric acid. In terms of biological role, responsible for the hydrolysis of cyanuric acid, an intermediate formed during catabolism of s-triazine based compounds in herbicides such as atrazine and polymers such as melamine. Catalyzes the hydrolytic opening of the s-triazine ring of cyanuric acid (2,4,6-trihydroxy-s-triazine) to yield carbon dioxide and carboxybiuret, which spontaneously decarboxylates to biuret. This is Cyanuric acid amidohydrolase from Methylobacterium sp. (strain 4-46).